We begin with the raw amino-acid sequence, 342 residues long: Photosystem II D2 protein (342 aa).

Over 1 to 29 (ERGWFDILDDWLKRDRFVFVGWSGILLFP) the chain is Cytoplasmic. Residues 30–50 (CAYLALGGWLTGTTFVTSWYT) form a helical membrane-spanning segment. Residues 51 to 113 (HGLASSYLEG…IALHGAFGLI (63 aa)) lie on the Lumenal side of the membrane. Histidine 107 is a chlorophyll a binding site. The chain crosses the membrane as a helical span at residues 114–130 (GFMLRQFEIARLVGVRP). The pheophytin a site is built by glutamine 119 and asparagine 132. The Cytoplasmic segment spans residues 131–141 (YNAIAFSAPIA). The helical transmembrane segment at 142 to 155 (VFVSVFLIYPLGQS) threads the bilayer. Residues 156-196 (SWFFAPSFGVAAIFRFLLFFQGFHNWTLNPFHMMGVAGVLG) lie on the Lumenal side of the membrane. Histidine 187 contributes to the chlorophyll a binding site. Residues 197–217 (GALLCAIHGATVENTLFQDGE) form a helical membrane-spanning segment. A plastoquinone is bound by residues histidine 204 and phenylalanine 251. Histidine 204 contacts Fe cation. The Cytoplasmic segment spans residues 218–267 (GASTFRAFNPTQAEETYSMVTANRFWSQIFGIAFSNKRWLHFFMLFVPVT). Histidine 258 lines the Fe cation pocket. The chain crosses the membrane as a helical span at residues 268-284 (GLWMSAIGVVGLALNLR). The Lumenal portion of the chain corresponds to 285 to 342 (SYDFISQEIRAAEDPEFETFYTKNLLLNEGIRAWMAPQDQPHENFVFPEEVLPRGNAL).

This sequence belongs to the reaction center PufL/M/PsbA/D family. As to quaternary structure, PSII is composed of 1 copy each of membrane proteins PsbA, PsbB, PsbC, PsbD, PsbE, PsbF, PsbH, PsbI, PsbJ, PsbK, PsbL, PsbM, PsbT, PsbX, PsbY, PsbZ, Psb30/Ycf12, peripheral proteins PsbO, CyanoQ (PsbQ), PsbU, PsbV and a large number of cofactors. It forms dimeric complexes. Requires The D1/D2 heterodimer binds P680, chlorophylls that are the primary electron donor of PSII, and subsequent electron acceptors. It shares a non-heme iron and each subunit binds pheophytin, quinone, additional chlorophylls, carotenoids and lipids. There is also a Cl(-1) ion associated with D1 and D2, which is required for oxygen evolution. The PSII complex binds additional chlorophylls, carotenoids and specific lipids. as cofactor.

It is found in the cellular thylakoid membrane. The enzyme catalyses 2 a plastoquinone + 4 hnu + 2 H2O = 2 a plastoquinol + O2. In terms of biological role, photosystem II (PSII) is a light-driven water:plastoquinone oxidoreductase that uses light energy to abstract electrons from H(2)O, generating O(2) and a proton gradient subsequently used for ATP formation. It consists of a core antenna complex that captures photons, and an electron transfer chain that converts photonic excitation into a charge separation. The D1/D2 (PsbA/PsbD) reaction center heterodimer binds P680, the primary electron donor of PSII as well as several subsequent electron acceptors. D2 is needed for assembly of a stable PSII complex. This chain is Photosystem II D2 protein, found in Thermostichus vulcanus (Synechococcus vulcanus).